We begin with the raw amino-acid sequence, 512 residues long: Extracellular serine/threonine protein kinase CeFam20 (512 aa).

The Cytoplasmic segment spans residues 1 to 6; sequence MRCNIK. The helical; Signal-anchor for type II membrane protein transmembrane segment at 7–26 threads the bilayer; the sequence is RLFTLAIGVFAATLVIISFS. At 27-512 the chain is on the lumenal side; that stretch reads KDNYEREWKQ…QDKKDDKKTV (486 aa). Cys-110 and Cys-144 are joined by a disulfide. An N-linked (GlcNAc...) asparagine glycan is attached at Asn-113. ATP contacts are provided by Gln-176, Lys-192, and Glu-213. Glu-213 provides a ligand contact to Mn(2+). The N-linked (GlcNAc...) asparagine glycan is linked to Asn-242. 2 cysteine pairs are disulfide-bonded: Cys-268/Cys-284 and Cys-273/Cys-277. 295-298 is an ATP binding site; it reads QVFL. Cystine bridges form between Cys-333-Cys-409 and Cys-410-Cys-469. Residue Asp-366 is part of the active site. 2 residues coordinate ATP: Glu-371 and Asp-387. Asp-387 serves as a coordination point for Mn(2+). The tract at residues 486 to 512 is disordered; that stretch reads PDVSDAEQNDEEQSEEHQDKKDDKKTV. The span at 489–499 shows a compositional bias: acidic residues; the sequence is SDAEQNDEEQS. A compositionally biased stretch (basic and acidic residues) spans 500 to 512; that stretch reads EEHQDKKDDKKTV.

It belongs to the FAM20 family. The cofactor is Mn(2+).

Its subcellular location is the golgi apparatus membrane. It is found in the secreted. It catalyses the reaction L-seryl-[protein] + ATP = O-phospho-L-seryl-[protein] + ADP + H(+). The catalysed reaction is L-threonyl-[protein] + ATP = O-phospho-L-threonyl-[protein] + ADP + H(+). In terms of biological role, golgi serine/threonine protein kinase that phosphorylates secretory pathway proteins within Ser-x-Glu/pSer motifs. This is Extracellular serine/threonine protein kinase CeFam20 from Caenorhabditis elegans.